A 669-amino-acid chain; its full sequence is Glutaminase kidney isoform, mitochondrial (669 aa).

Residues 1–54 (MMRLRGSGMLRDLLLRSPAGVSATLRRAQPLVTLCRRPRGGGRPAAGPAAAARL) constitute a mitochondrion transit peptide. The tract at residues 68-118 (LARGLSSSPSEILQELGKGSTHPQPGVSPPAAPAAPGPKDGPGETDAFGNS) is disordered. Positions 93–103 (GVSPPAAPAAP) are enriched in pro residues. Residues lysine 130 and lysine 164 each carry the N6-succinyllysine modification. A substrate-binding site is contributed by serine 286. Lysine 311 is modified (N6-acetyllysine). The tract at residues 315–322 (GLRFNKLF) is highly mobile activation loop. Substrate-binding residues include asparagine 335, glutamate 381, asparagine 388, tyrosine 414, tyrosine 466, and valine 484. 2 ANK repeats span residues 585–614 (DSRT…VNPF) and 619–648 (WNNT…QYTP). The interval 647–669 (TPQGDSDNGKENQTVHKNLDGLL) is disordered. Serine 652 is subject to Phosphoserine. Over residues 653-669 (DNGKENQTVHKNLDGLL) the composition is skewed to basic and acidic residues.

The protein belongs to the glutaminase family. Homotetramer, dimer of dimers. The tetramers can assemble into rod-like oligomers (in vitro), but the physiological significance of this is not clear. Interacts with RAF1 and MAP2K2. Interacts with ATCAY; the interaction is direct and may control GLS localization, negatively regulating its activity. Synthesized as a 74-kDa cytosolic precursor which is proteolytically processed by the mitochondrial-processing peptidase (MPP) via a 72-kDa intermediate to yield the mature mitochondrial 68- and 65-kDa subunits. In terms of tissue distribution, isoform 1 and isoform 3 are detected in brain cortex. Isoform 3 is highly expressed in astrocytoma, ganglioglioma and ependymoma. Isoform 1 is highly expressed in brain and kidney, but not detected in liver. Isoform 3 is highly expressed in heart and pancreas, detected at lower levels in placenta, lung, pancreas and kidney, but is not detected in liver. Isoform 2 is expressed in cardiac and skeletal muscle.

The protein localises to the mitochondrion. It localises to the cytoplasm. The protein resides in the cytosol. Its subcellular location is the mitochondrion matrix. It catalyses the reaction L-glutamine + H2O = L-glutamate + NH4(+). Isoform 1 and isoform 3 are activated by phosphate. Inhibited by BPTES. BPTES binds between subunits and favors dissociation of the tetramer into dimers. Inhibited by 6-diazo-5-oxo-L-norleucine (DON). Enzyme activity is stimulated by phosphorylation. In terms of biological role, catalyzes the first reaction in the primary pathway for the renal catabolism of glutamine. Plays a role in maintaining acid-base homeostasis. Regulates the levels of the neurotransmitter glutamate, the main excitatory neurotransmitter in the brain. Lacks catalytic activity. The sequence is that of Glutaminase kidney isoform, mitochondrial (GLS) from Homo sapiens (Human).